The primary structure comprises 96 residues: MNIRPLHDRVIVKRSEVESKSAGGIVLTGSAAEQSTRGEVLAVGNGRILENGTVQPLDVKVGDIVIFNEGYGVKKEKIDGQEVLILSESDLMAVVE.

This sequence belongs to the GroES chaperonin family. Heptamer of 7 subunits arranged in a ring. Interacts with the chaperonin GroEL.

It is found in the cytoplasm. Functionally, together with the chaperonin GroEL, plays an essential role in assisting protein folding. The GroEL-GroES system forms a nano-cage that allows encapsulation of the non-native substrate proteins and provides a physical environment optimized to promote and accelerate protein folding. GroES binds to the apical surface of the GroEL ring, thereby capping the opening of the GroEL channel. This is Co-chaperonin GroES from Shewanella loihica (strain ATCC BAA-1088 / PV-4).